The following is a 152-amino-acid chain: UPF0735 ACT domain-containing protein SAS1579 (152 aa).

In terms of domain architecture, ACT spans 75-150 (TLILYVTDIV…YVSKVELISM (76 aa)).

The protein belongs to the UPF0735 family.

The protein is UPF0735 ACT domain-containing protein SAS1579 of Staphylococcus aureus (strain MSSA476).